The sequence spans 387 residues: Eukaryotic translation initiation factor 3 subunit M (387 aa).

The 160-residue stretch at 181 to 340 folds into the PCI domain; that stretch reads LSSKVMIELL…RKVHISSTMH (160 aa).

The protein belongs to the eIF-3 subunit M family. In terms of assembly, component of the eukaryotic translation initiation factor 3 (eIF-3) complex. The eIF-3 complex interacts with pix.

The protein localises to the cytoplasm. Its subcellular location is the golgi apparatus. Component of the eukaryotic translation initiation factor 3 (eIF-3) complex, which is involved in protein synthesis of a specialized repertoire of mRNAs and, together with other initiation factors, stimulates binding of mRNA and methionyl-tRNAi to the 40S ribosome. The eIF-3 complex specifically targets and initiates translation of a subset of mRNAs involved in cell proliferation. This Drosophila mojavensis (Fruit fly) protein is Eukaryotic translation initiation factor 3 subunit M.